The primary structure comprises 87 residues: UPF0175 protein AF_0597 (87 aa).

This sequence belongs to the UPF0175 family.

The sequence is that of UPF0175 protein AF_0597 from Archaeoglobus fulgidus (strain ATCC 49558 / DSM 4304 / JCM 9628 / NBRC 100126 / VC-16).